Consider the following 799-residue polypeptide: Lon protease (799 aa).

A Lon N-terminal domain is found at 7–200; it reads LPVLPLRDIV…KVFALMEGEI (194 aa). 352–359 lines the ATP pocket; sequence GPPGVGKT. One can recognise a Lon proteolytic domain in the interval 587–768; the sequence is VDQVGIVTGL…DEVLKHALTG (182 aa). Catalysis depends on residues Ser-674 and Lys-717. The segment at 772 to 799 is disordered; sequence PVEWNEAEEPITTSAKKDDGDSDAMLTH.

Belongs to the peptidase S16 family. Homohexamer. Organized in a ring with a central cavity.

It is found in the cytoplasm. It catalyses the reaction Hydrolysis of proteins in presence of ATP.. In terms of biological role, ATP-dependent serine protease that mediates the selective degradation of mutant and abnormal proteins as well as certain short-lived regulatory proteins. Required for cellular homeostasis and for survival from DNA damage and developmental changes induced by stress. Degrades polypeptides processively to yield small peptide fragments that are 5 to 10 amino acids long. Binds to DNA in a double-stranded, site-specific manner. CcrM is an important target of the Lon protease pathway in C.crescentus. The polypeptide is Lon protease (Caulobacter vibrioides (strain ATCC 19089 / CIP 103742 / CB 15) (Caulobacter crescentus)).